The sequence spans 166 residues: MGPSSAFLGVLFLSGTLGLTTSPARGRLRCYTCSFAKPCDPVPRECREDEVCGVSVGTSGRTLVRWPFSRWLLSFLPMAAAATSAFLFCPTEQKEEEVIERKGCLPRAQCPLLGHATYWSRSYSLRHQCCEQDLCNAAASQPPPNLPLMTLLPLAAMIGWGVHDFL.

The N-terminal stretch at 1–18 (MGPSSAFLGVLFLSGTLG) is a signal peptide. One can recognise a UPAR/Ly6 domain in the interval 28–151 (LRCYTCSFAK…PPPNLPLMTL (124 aa)). Disulfide bonds link Cys-30/Cys-52, Cys-33/Cys-39, Cys-110/Cys-129, and Cys-130/Cys-135.

In terms of assembly, interacts with CHRNA4. Post-translationally, O-glycosylated. Contains sialic acid residues.

The protein resides in the cell surface. Its subcellular location is the cell membrane. The protein localises to the cell projection. In terms of biological role, believed to act as a modulator of nicotinic acetylcholine receptors (nAChRs) activity. In vitro potentiates alpha-3:beta-4-containing nAChRs maximum response by increasing peak current and slowing down receptor desensitization; the activity is dependent on its cell surface localization. The protein is Lymphocyte antigen 6G6e (Ly6g6e) of Mus musculus (Mouse).